The sequence spans 89 residues: Small ribosomal subunit protein uS15 (89 aa).

It belongs to the universal ribosomal protein uS15 family. Part of the 30S ribosomal subunit. Forms a bridge to the 50S subunit in the 70S ribosome, contacting the 23S rRNA.

Functionally, one of the primary rRNA binding proteins, it binds directly to 16S rRNA where it helps nucleate assembly of the platform of the 30S subunit by binding and bridging several RNA helices of the 16S rRNA. Forms an intersubunit bridge (bridge B4) with the 23S rRNA of the 50S subunit in the ribosome. The protein is Small ribosomal subunit protein uS15 of Chlamydia muridarum (strain MoPn / Nigg).